Consider the following 118-residue polypeptide: Holin-like protein CidA 2 (118 aa).

4 helical membrane-spanning segments follow: residues 5-27 (MLLL…QGVF), 31-50 (MPGS…TRIL), 62-84 (LLVF…ESFL), and 88-110 (GSII…GYIS).

It belongs to the CidA/LrgA family. CidA subfamily.

It localises to the cell membrane. Increases the activity of extracellular murein hydrolases possibly by mediating their export via hole formation. Inhibited by the antiholin-like proteins LrgAB. In an unstressed cell, the LrgAB products probably inhibit the function of the CidA protein. When a cell is stressed by the addition of antibiotics or by other factors in the environment, CidA possibly oligomerizes within the bacterial cell membrane, creating lesions that disrupt the proton motive force, which in turn results in loss of cell viability. These lesions are also hypothesized to regulate the subsequent cell lysis by either allowing the murein hydrolases access to the cell wall substrate and/or regulating their activity by a possible change in the cell wall pH that results from loss of membrane potential. This Bacillus anthracis protein is Holin-like protein CidA 2 (cidA2).